Reading from the N-terminus, the 209-residue chain is Outer-membrane lipoprotein carrier protein (209 aa).

The first 24 residues, 1 to 24 (MTRYVISRLSAIALLALAPALALA), serve as a signal peptide directing secretion.

This sequence belongs to the LolA family. As to quaternary structure, monomer.

The protein resides in the periplasm. In terms of biological role, participates in the translocation of lipoproteins from the inner membrane to the outer membrane. Only forms a complex with a lipoprotein if the residue after the N-terminal Cys is not an aspartate (The Asp acts as a targeting signal to indicate that the lipoprotein should stay in the inner membrane). The protein is Outer-membrane lipoprotein carrier protein of Bordetella avium (strain 197N).